The primary structure comprises 338 residues: 1-aminocyclopropane-1-carboxylate deaminase (338 aa).

Lys51 carries the N6-(pyridoxal phosphate)lysine modification. Ser78 functions as the Nucleophile in the catalytic mechanism.

The protein belongs to the ACC deaminase/D-cysteine desulfhydrase family. As to quaternary structure, homotrimer. The cofactor is pyridoxal 5'-phosphate.

It catalyses the reaction 1-aminocyclopropane-1-carboxylate + H2O = 2-oxobutanoate + NH4(+). Its function is as follows. Catalyzes a cyclopropane ring-opening reaction, the irreversible conversion of 1-aminocyclopropane-1-carboxylate (ACC) to ammonia and alpha-ketobutyrate. Allows growth on ACC as a nitrogen source. In Pseudomonas sp. (strain ACP), this protein is 1-aminocyclopropane-1-carboxylate deaminase.